We begin with the raw amino-acid sequence, 86 residues long: Cytochrome c oxidase subunit 6B1 (86 aa).

Ala-2 carries the post-translational modification N-acetylalanine. One can recognise a CHCH domain in the interval 27–73 (TRNCWQNYLDFHRCQKAMTAKGGDISVCEWYQRVYQSLCPTSWVTDW). Positions 30–40 (CWQNYLDFHRC) match the Cx9C motif motif. Intrachain disulfides connect Cys-30/Cys-65 and Cys-40/Cys-54. The Cx10C motif signature appears at 54 to 65 (CEWYQRVYQSLC).

Belongs to the cytochrome c oxidase subunit 6B family. Component of the cytochrome c oxidase (complex IV, CIV), a multisubunit enzyme composed of 14 subunits. The complex is composed of a catalytic core of 3 subunits MT-CO1, MT-CO2 and MT-CO3, encoded in the mitochondrial DNA, and 11 supernumerary subunits COX4I1 (or COX4I2), COX5A, COX5B, COX6A1 (or COX6A2), COX6B1 (or COX6B2), COX6C, COX7A2 (or COX7A1), COX7B, COX7C, COX8A and NDUFA4, which are encoded in the nuclear genome. The complex exists as a monomer or a dimer and forms supercomplexes (SCs) in the inner mitochondrial membrane with NADH-ubiquinone oxidoreductase (complex I, CI) and ubiquinol-cytochrome c oxidoreductase (cytochrome b-c1 complex, complex III, CIII), resulting in different assemblies (supercomplex SCI(1)III(2)IV(1) and megacomplex MCI(2)III(2)IV(2)).

The protein resides in the mitochondrion inner membrane. Its pathway is energy metabolism; oxidative phosphorylation. In terms of biological role, component of the cytochrome c oxidase, the last enzyme in the mitochondrial electron transport chain which drives oxidative phosphorylation. The respiratory chain contains 3 multisubunit complexes succinate dehydrogenase (complex II, CII), ubiquinol-cytochrome c oxidoreductase (cytochrome b-c1 complex, complex III, CIII) and cytochrome c oxidase (complex IV, CIV), that cooperate to transfer electrons derived from NADH and succinate to molecular oxygen, creating an electrochemical gradient over the inner membrane that drives transmembrane transport and the ATP synthase. Cytochrome c oxidase is the component of the respiratory chain that catalyzes the reduction of oxygen to water. Electrons originating from reduced cytochrome c in the intermembrane space (IMS) are transferred via the dinuclear copper A center (CU(A)) of subunit 2 and heme A of subunit 1 to the active site in subunit 1, a binuclear center (BNC) formed by heme A3 and copper B (CU(B)). The BNC reduces molecular oxygen to 2 water molecules using 4 electrons from cytochrome c in the IMS and 4 protons from the mitochondrial matrix. This Homo sapiens (Human) protein is Cytochrome c oxidase subunit 6B1 (COX6B1).